Here is a 521-residue protein sequence, read N- to C-terminus: GMP synthase [glutamine-hydrolyzing] (521 aa).

The Glutamine amidotransferase type-1 domain occupies 5-197 (KILILDFGSQ…VLDICGAQPG (193 aa)). The active-site Nucleophile is the Cys-81. Residues His-171 and Glu-173 contribute to the active site. The region spanning 198 to 390 (WTMPNYIEEA…LGLPREMVYR (193 aa)) is the GMPS ATP-PPase domain. Residue 225 to 231 (SGGVDSS) coordinates ATP.

As to quaternary structure, homodimer.

It catalyses the reaction XMP + L-glutamine + ATP + H2O = GMP + L-glutamate + AMP + diphosphate + 2 H(+). The protein operates within purine metabolism; GMP biosynthesis; GMP from XMP (L-Gln route): step 1/1. Functionally, catalyzes the synthesis of GMP from XMP. This is GMP synthase [glutamine-hydrolyzing] from Neisseria gonorrhoeae (strain ATCC 700825 / FA 1090).